An 89-amino-acid polypeptide reads, in one-letter code: Abortive infection protein (89 aa).

The protein resides in the cell membrane. Functionally, ABI may interact with a target in the cell membrane, which could be the product of the host's cmrA gene, and cause disruption of the cellular membrane such that lysis of the infected cell and death of the infecting phage would result. In Escherichia coli, this protein is Abortive infection protein (abi).